The sequence spans 140 residues: Putative cell wall protein (140 aa).

Residues 1–21 (MASSLITSAVIVVVLSLVLGS) form the signal peptide. The span at 85 to 98 (TGGGIPSYNGGQGA) shows a compositional bias: gly residues. The tract at residues 85–140 (TGGGIPSYNGGQGAGPHTQLPGGDDTLVPNPGFEAPTPTIGAGTGSNGQVPPVPLP) is disordered.

As to expression, inflorescence.

The protein resides in the secreted. It is found in the cell wall. The protein is Putative cell wall protein of Arabidopsis thaliana (Mouse-ear cress).